Reading from the N-terminus, the 578-residue chain is Proteasome-associated ATPase (578 aa).

Residues 35–84 are a coiled coil; the sequence is RHLTALEEQLGAARTRLAQVSAQNDRLATTLREARDQIVALKAEVDRLGQ. 266 to 271 serves as a coordination point for ATP; that stretch reads GCGKTL. The interval 577–578 is docks into pockets in the proteasome alpha-ring; it reads YL.

It belongs to the AAA ATPase family. In terms of assembly, homohexamer. Assembles into a hexameric ring structure that caps the 20S proteasome core. Strongly interacts with the prokaryotic ubiquitin-like protein Pup through a hydrophobic interface; the interacting region of ARC lies in its N-terminal coiled-coil domain. There is one Pup binding site per ARC hexamer ring. Upon ATP-binding, the C-terminus of ARC interacts with the alpha-rings of the proteasome core, possibly by binding to the intersubunit pockets.

Its pathway is protein degradation; proteasomal Pup-dependent pathway. Functionally, ATPase which is responsible for recognizing, binding, unfolding and translocation of pupylated proteins into the bacterial 20S proteasome core particle. May be essential for opening the gate of the 20S proteasome via an interaction with its C-terminus, thereby allowing substrate entry and access to the site of proteolysis. Thus, the C-termini of the proteasomal ATPase may function like a 'key in a lock' to induce gate opening and therefore regulate proteolysis. The polypeptide is Proteasome-associated ATPase (Kineococcus radiotolerans (strain ATCC BAA-149 / DSM 14245 / SRS30216)).